A 246-amino-acid polypeptide reads, in one-letter code: 1-(5-phosphoribosyl)-5-[(5-phosphoribosylamino)methylideneamino] imidazole-4-carboxamide isomerase (246 aa).

Asp-7 acts as the Proton acceptor in catalysis. Asp-130 (proton donor) is an active-site residue.

The protein belongs to the HisA/HisF family.

It localises to the cytoplasm. It catalyses the reaction 1-(5-phospho-beta-D-ribosyl)-5-[(5-phospho-beta-D-ribosylamino)methylideneamino]imidazole-4-carboxamide = 5-[(5-phospho-1-deoxy-D-ribulos-1-ylimino)methylamino]-1-(5-phospho-beta-D-ribosyl)imidazole-4-carboxamide. It participates in amino-acid biosynthesis; L-histidine biosynthesis; L-histidine from 5-phospho-alpha-D-ribose 1-diphosphate: step 4/9. The polypeptide is 1-(5-phosphoribosyl)-5-[(5-phosphoribosylamino)methylideneamino] imidazole-4-carboxamide isomerase (Blochmanniella pennsylvanica (strain BPEN)).